Consider the following 305-residue polypeptide: Guanine nucleotide-binding protein subunit beta (305 aa).

7 WD repeats span residues 19–49 (NKLG…LVWD), 61–91 (APSV…VVYD), 104–133 (GHAG…MFWD), 145–176 (GHEM…KLWD), 188–218 (GNTS…RCFD), 231–260 (PSSS…EVWD), and 272–302 (GHEN…RLWS).

This sequence belongs to the WD repeat G protein beta family. As to quaternary structure, g proteins are composed of 3 units, alpha, beta and gamma. Binding of the beta-gamma subunit complex (git5-git11) to the alpha subunit (gpa2) facilitates interaction with GPCR git3.

The protein localises to the cell membrane. Its subcellular location is the cytoplasm. It localises to the nucleus. In terms of biological role, beta subunit of the heterotrimeric guanine nucleotide-binding protein (G protein) involved in glucose-induced cAMP signaling. The beta-gamma subunits (git5-git11) promote binding of the alpha subunit gpa2 to GPCR git3, which senses extracellular glucose, to activate cAMP-PKA signaling and repress sexual development and gluconeogenesis. The protein is Guanine nucleotide-binding protein subunit beta (git5) of Schizosaccharomyces pombe (strain 972 / ATCC 24843) (Fission yeast).